The primary structure comprises 271 residues: Probable CAAX prenyl protease 2 (271 aa).

The next 2 membrane-spanning stretches (helical) occupy residues 3–23 (VYLI…TFPV) and 42–62 (CISV…IIGP). Active-site proton donor/acceptor residues include E126 and H160. 2 helical membrane passes run 174 to 194 (AYIA…VFGW) and 236 to 256 (IYYT…GITD).

The protein belongs to the peptidase U48 family.

The protein resides in the endoplasmic reticulum membrane. The enzyme catalyses Hydrolyzes the peptide bond -P2-(S-farnesyl or geranylgeranyl)C-P1'-P2'-P3'-COOH where P1' and P2' are amino acids with aliphatic sidechains and P3' is any C-terminal residue.. Its function is as follows. Protease involved in the processing of a variety of prenylated proteins containing the C-terminal CAAX motif, where C is a cysteine modified with an isoprenoid lipid, A is an aliphatic amino acid and X is any C-terminal amino acid. Proteolytically removes the C-terminal three residues of farnesylated proteins, leaving the prenylated cysteine as the new C-terminus. This is Probable CAAX prenyl protease 2 from Schizosaccharomyces pombe (strain 972 / ATCC 24843) (Fission yeast).